The chain runs to 466 residues: Asparagine--tRNA ligase (466 aa).

The protein belongs to the class-II aminoacyl-tRNA synthetase family. Homodimer.

It is found in the cytoplasm. It catalyses the reaction tRNA(Asn) + L-asparagine + ATP = L-asparaginyl-tRNA(Asn) + AMP + diphosphate + H(+). The protein is Asparagine--tRNA ligase of Buchnera aphidicola subsp. Baizongia pistaciae (strain Bp).